Here is a 136-residue protein sequence, read N- to C-terminus: Ribonuclease VapC47 (136 aa).

A PINc domain is found at 2-104 (IYMDTSALTK…AIHLAAAAQI (103 aa)). Residues Asp-5 and Asp-94 each coordinate Mg(2+).

It belongs to the PINc/VapC protein family. It depends on Mg(2+) as a cofactor.

Its function is as follows. Toxic component of a type II toxin-antitoxin (TA) system. An RNase. Its toxic effect on colony formation is neutralized by coexpression with cognate antitoxin VapB47. This Mycobacterium tuberculosis (strain CDC 1551 / Oshkosh) protein is Ribonuclease VapC47.